The chain runs to 599 residues: Sulfite reductase [NADPH] flavoprotein alpha-component (599 aa).

Residues 64 to 202 (ITIISASQTG…AASEWRARVV (139 aa)) form the Flavodoxin-like domain. FMN contacts are provided by residues 70–75 (SQTGNA), 117–120 (STQG), and 153–162 (LGDSSYEFFC). The 215-residue stretch at 234–448 (DAPLVASLSV…IEHNDNFRLP (215 aa)) folds into the FAD-binding FR-type domain. Residues T322, A356, 386–389 (RLYS), 404–406 (TVG), Y410, and 419–422 (GGAS) each bind FAD. Residues 519 to 520 (SR), 525 to 529 (KVYVQ), and D561 contribute to the NADP(+) site. Y599 lines the FAD pocket.

Belongs to the NADPH-dependent sulphite reductase flavoprotein subunit CysJ family. This sequence in the N-terminal section; belongs to the flavodoxin family. The protein in the C-terminal section; belongs to the flavoprotein pyridine nucleotide cytochrome reductase family. As to quaternary structure, alpha(8)-beta(8). The alpha component is a flavoprotein, the beta component is a hemoprotein. Requires FAD as cofactor. FMN serves as cofactor.

It carries out the reaction hydrogen sulfide + 3 NADP(+) + 3 H2O = sulfite + 3 NADPH + 4 H(+). It participates in sulfur metabolism; hydrogen sulfide biosynthesis; hydrogen sulfide from sulfite (NADPH route): step 1/1. Component of the sulfite reductase complex that catalyzes the 6-electron reduction of sulfite to sulfide. This is one of several activities required for the biosynthesis of L-cysteine from sulfate. The flavoprotein component catalyzes the electron flow from NADPH -&gt; FAD -&gt; FMN to the hemoprotein component. The sequence is that of Sulfite reductase [NADPH] flavoprotein alpha-component from Shigella dysenteriae serotype 1 (strain Sd197).